Here is a 122-residue protein sequence, read N- to C-terminus: Urease subunit beta (122 aa).

This sequence belongs to the urease beta subunit family. Heterotrimer of UreA (gamma), UreB (beta) and UreC (alpha) subunits. Three heterotrimers associate to form the active enzyme.

Its subcellular location is the cytoplasm. It catalyses the reaction urea + 2 H2O + H(+) = hydrogencarbonate + 2 NH4(+). The protein operates within nitrogen metabolism; urea degradation; CO(2) and NH(3) from urea (urease route): step 1/1. The protein is Urease subunit beta of Lysinibacillus sphaericus (strain C3-41).